The chain runs to 887 residues: Alanine--tRNA ligase (887 aa).

Residues histidine 581, histidine 585, cysteine 683, and histidine 687 each contribute to the Zn(2+) site.

It belongs to the class-II aminoacyl-tRNA synthetase family. The cofactor is Zn(2+).

Its subcellular location is the cytoplasm. It carries out the reaction tRNA(Ala) + L-alanine + ATP = L-alanyl-tRNA(Ala) + AMP + diphosphate. Catalyzes the attachment of alanine to tRNA(Ala) in a two-step reaction: alanine is first activated by ATP to form Ala-AMP and then transferred to the acceptor end of tRNA(Ala). Also edits incorrectly charged Ser-tRNA(Ala) and Gly-tRNA(Ala) via its editing domain. The chain is Alanine--tRNA ligase from Ehrlichia chaffeensis (strain ATCC CRL-10679 / Arkansas).